The primary structure comprises 85 residues: Probable dolichol-phosphate mannosyltransferase subunit 3 (85 aa).

2 helical membrane-spanning segments follow: residues 13–33 and 37–57; these read VLLVLVWLLAYTEVVPVLSYI and AHCLVYYIYAAFNVIYGVATF.

This sequence belongs to the DPM3 family.

Its subcellular location is the endoplasmic reticulum membrane. It functions in the pathway protein modification; protein glycosylation. Stabilizer subunit of the dolichol-phosphate-mannose synthase complex. This is Probable dolichol-phosphate mannosyltransferase subunit 3 from Caenorhabditis briggsae.